The following is a 182-amino-acid chain: MSTQDLEASMRKSVEATQRNFNTIRTGRANSSLLDRISVEYYGAETPLKSLATLSTPDSQTIQIQPFDISALASIEKAIAMSELGFTPNNDGKIIRINVPPLTEERRKEFCKLASKYAEEGKVALRNLRRDAIDKVKKQEKDGDFSEDQSRDEQDAVQKTLDKFIAELEKHLADKEADILKV.

Belongs to the RRF family.

The protein resides in the cytoplasm. Functionally, responsible for the release of ribosomes from messenger RNA at the termination of protein biosynthesis. May increase the efficiency of translation by recycling ribosomes from one round of translation to another. The sequence is that of Ribosome-recycling factor from Parasynechococcus marenigrum (strain WH8102).